The chain runs to 332 residues: Large ribosomal subunit protein mL44 (332 aa).

Residues 1–30 constitute a mitochondrion transit peptide; it reads MASGLTRLLLRGPRCLLATAGLTLIPPVRG. An RNase III domain is found at 86–228; the sequence is DLLKTAFVNS…LITQMTGKEL (143 aa). The DRBM domain maps to 236–306; that stretch reads NPMGLLVQEL…ARVALRKLYG (71 aa).

It belongs to the ribonuclease III family. Mitochondrion-specific ribosomal protein mL44 subfamily. Component of the mitochondrial ribosome large subunit (39S) which comprises a 16S rRNA and about 50 distinct proteins.

The protein resides in the mitochondrion. In terms of biological role, component of the 39S subunit of mitochondrial ribosome. May have a function in the assembly/stability of nascent mitochondrial polypeptides exiting the ribosome. The polypeptide is Large ribosomal subunit protein mL44 (MRPL44) (Bos taurus (Bovine)).